Here is a 407-residue protein sequence, read N- to C-terminus: MKYDNLLDRFIKYVKVNTRSDPDSETTPSTESQEVFALTILKPEMEAIGLQDVHYNPVNGYLIGTLPANNPTLTRKIGFIAHMDTADFNAENVNPQIIDNYQGGDITLGSSNYKLDPEAFPNLNNYIGQTLITTDGTTLLGADDKSGIAEIMTAIEFLTSQPQIEHCDIKVAFGPDEEIGVGADKFEVADFEVDFAYTMDGGPLGELQYETFSAAALEVTFLGRNVHPGTAKDQMINALQLAIDFHEKLPAKERPEYTDGYQGFYHLTGLTGTVEEARASYIIRDFEEASFEARKVKVENIAQSMNAHLGTKRVLVELNDQYYNMKKVIEKDMTAIELAKEVMEELAIKPVIEPIRGGTDGSKISFMGIPTPNIFAGGENMHGRFEFVSLQTMERAVDVIIGLVCKA.

Zn(2+) is bound at residue His-82. Asp-84 is an active-site residue. Position 143 (Asp-143) interacts with Zn(2+). Glu-177 serves as the catalytic Proton acceptor. Residues Glu-178, Asp-200, and His-382 each coordinate Zn(2+).

The protein belongs to the peptidase M20B family. It depends on Zn(2+) as a cofactor.

The protein resides in the cytoplasm. The enzyme catalyses Release of the N-terminal residue from a tripeptide.. In terms of biological role, cleaves the N-terminal amino acid of tripeptides. The protein is Peptidase T of Streptococcus pyogenes serotype M49 (strain NZ131).